The primary structure comprises 217 residues: Dephospho-CoA kinase (217 aa).

Residues 2-217 form the DPCK domain; the sequence is VIGLTGGIAS…RELARIEEQK (216 aa). Position 10–15 (10–15) interacts with ATP; sequence ASGKST.

This sequence belongs to the CoaE family.

It localises to the cytoplasm. The enzyme catalyses 3'-dephospho-CoA + ATP = ADP + CoA + H(+). It functions in the pathway cofactor biosynthesis; coenzyme A biosynthesis; CoA from (R)-pantothenate: step 5/5. In terms of biological role, catalyzes the phosphorylation of the 3'-hydroxyl group of dephosphocoenzyme A to form coenzyme A. The protein is Dephospho-CoA kinase of Lactococcus lactis subsp. lactis (strain IL1403) (Streptococcus lactis).